The chain runs to 300 residues: Cell shape-determining protein MreC (300 aa).

The Cytoplasmic segment spans residues 1–17 (MARDRTRPEDFTRPLRR). A helical membrane pass occupies residues 18 to 38 (ILVGGLVLLLLGIFLIWRIDS). Residues 39-300 (PRVEQFRAAL…APAAVEGADG (262 aa)) are Periplasmic-facing. Positions 74-117 (QSYTRIYEQNQELRRELQQMKAWKEAALQLEQKNARLLDLNQVR) form a coiled coil. The segment at 277–300 (SDPGKLVAEPPAPPAPAAVEGADG) is disordered.

The protein belongs to the MreC family.

The protein localises to the cell inner membrane. Involved in formation and maintenance of cell shape. The chain is Cell shape-determining protein MreC from Cereibacter sphaeroides (Rhodobacter sphaeroides).